Here is a 166-residue protein sequence, read N- to C-terminus: 6,7-dimethyl-8-ribityllumazine synthase (166 aa).

Residues phenylalanine 24, 58–60, and 82–84 each bind 5-amino-6-(D-ribitylamino)uracil; these read ALE and AVV. Residue 87-88 participates in (2S)-2-hydroxy-3-oxobutyl phosphate binding; it reads ET. Histidine 90 functions as the Proton donor in the catalytic mechanism. Residue asparagine 115 coordinates 5-amino-6-(D-ribitylamino)uracil. Arginine 129 provides a ligand contact to (2S)-2-hydroxy-3-oxobutyl phosphate.

The protein belongs to the DMRL synthase family.

The enzyme catalyses (2S)-2-hydroxy-3-oxobutyl phosphate + 5-amino-6-(D-ribitylamino)uracil = 6,7-dimethyl-8-(1-D-ribityl)lumazine + phosphate + 2 H2O + H(+). Its pathway is cofactor biosynthesis; riboflavin biosynthesis; riboflavin from 2-hydroxy-3-oxobutyl phosphate and 5-amino-6-(D-ribitylamino)uracil: step 1/2. In terms of biological role, catalyzes the formation of 6,7-dimethyl-8-ribityllumazine by condensation of 5-amino-6-(D-ribitylamino)uracil with 3,4-dihydroxy-2-butanone 4-phosphate. This is the penultimate step in the biosynthesis of riboflavin. In Cupriavidus necator (strain ATCC 17699 / DSM 428 / KCTC 22496 / NCIMB 10442 / H16 / Stanier 337) (Ralstonia eutropha), this protein is 6,7-dimethyl-8-ribityllumazine synthase.